We begin with the raw amino-acid sequence, 113 residues long: U11-theraphotoxin-Hhn1a (113 aa).

The first 21 residues, 1 to 21, serve as a signal peptide directing secretion; sequence MNTVRVTFLPVFVLAVSLGQA. Residues 22-74 constitute a propeptide that is removed on maturation; the sequence is DKDENRMEMQEKTEQGKSYLDFAENLLLQKLEELEAKLLEEDSEESRNSRQKR. Residues 61 to 83 are disordered; that stretch reads EEDSEESRNSRQKRCIGEGVPCD. 3 disulfide bridges follow: cysteine 75/cysteine 90, cysteine 82/cysteine 95, and cysteine 89/cysteine 110.

It belongs to the neurotoxin 14 (magi-1) family. 01 (HNTX-16) subfamily. In terms of tissue distribution, expressed by the venom gland.

Its subcellular location is the secreted. The protein is U11-theraphotoxin-Hhn1a of Cyriopagopus hainanus (Chinese bird spider).